The primary structure comprises 198 residues: Recombination protein RecR (198 aa).

The segment at 57–72 adopts a C4-type zinc-finger fold; it reads CEKCNTFTEAQICEVC. The region spanning 80–175 is the Toprim domain; the sequence is TLLCVVETPA…AVTRLARGVP (96 aa).

Belongs to the RecR family.

Functionally, may play a role in DNA repair. It seems to be involved in an RecBC-independent recombinational process of DNA repair. It may act with RecF and RecO. This chain is Recombination protein RecR, found in Burkholderia vietnamiensis (strain G4 / LMG 22486) (Burkholderia cepacia (strain R1808)).